The primary structure comprises 442 residues: 3-phosphoshikimate 1-carboxyvinyltransferase (442 aa).

Lysine 25, serine 26, and arginine 30 together coordinate 3-phosphoshikimate. Residue lysine 25 coordinates phosphoenolpyruvate. Residues glycine 96 and arginine 124 each coordinate phosphoenolpyruvate. 6 residues coordinate 3-phosphoshikimate: serine 171, serine 172, glutamine 173, serine 203, aspartate 325, and lysine 352. Phosphoenolpyruvate is bound at residue glutamine 173. The active-site Proton acceptor is the aspartate 325. Residues arginine 356, arginine 400, and lysine 425 each coordinate phosphoenolpyruvate.

It belongs to the EPSP synthase family. Monomer.

It is found in the cytoplasm. The catalysed reaction is 3-phosphoshikimate + phosphoenolpyruvate = 5-O-(1-carboxyvinyl)-3-phosphoshikimate + phosphate. It functions in the pathway metabolic intermediate biosynthesis; chorismate biosynthesis; chorismate from D-erythrose 4-phosphate and phosphoenolpyruvate: step 6/7. In terms of biological role, catalyzes the transfer of the enolpyruvyl moiety of phosphoenolpyruvate (PEP) to the 5-hydroxyl of shikimate-3-phosphate (S3P) to produce enolpyruvyl shikimate-3-phosphate and inorganic phosphate. This chain is 3-phosphoshikimate 1-carboxyvinyltransferase, found in Bordetella bronchiseptica (strain ATCC BAA-588 / NCTC 13252 / RB50) (Alcaligenes bronchisepticus).